Reading from the N-terminus, the 423-residue chain is MLWRNEITEFMDQLSKYSQEILKTFKQLRPSEYKQYNEFLTQVTPLLQKTPDKIPELVDHIFNYLDNVEKICELLVNASSIIISSKIREQVKHGMSFSYKADLDSLADILIQKQYVLMHLSKNIAAQYFNTCLNQGKSKLDLKAASVFYSSRPRTASSAELYRKMLYAYGSPQEINYYTEKARNKTLDVEESDSMAIIERTARHNLSLMHPLEAMGLTFGATNTDADPEDLKDKTVINLTLPQATESITYHLKSLMQLKKVSTASGLNTNILKAFDNIISTPVKKNKMASKLAPGMDVVFTSDNGKTFFTKNILSKNMLAGPKERVFAYNNLISNLNNSCFIQNHNDFLRQQDSWPFYDAHNFTNKFLMQPIFSGQTRPRLQGAMEAAHVETHLTAFLQSIQPSRPQDPSVLASPKLSALILN.

The protein belongs to the asfivirus E423R family.

The protein localises to the virion. This is an uncharacterized protein from Ornithodoros (relapsing fever ticks).